We begin with the raw amino-acid sequence, 349 residues long: 1-acylglycerol-3-phosphate O-acyltransferase ABHD5 (349 aa).

Alanine 2 is subject to N-acetylalanine. One can recognise an AB hydrolase-1 domain in the interval 77-185 (PLVLLHGFGG…VEPWGFPERP (109 aa)). Residues 327–332 (HYVYAD) carry the HXXXXD motif motif.

Belongs to the peptidase S33 family. ABHD4/ABHD5 subfamily. In terms of assembly, interacts with ADRP, PLIN and PNPLA2. Interacts with PLIN5; promotes interaction with PNPLA2.

The protein resides in the cytoplasm. It is found in the lipid droplet. It catalyses the reaction a 1-acyl-sn-glycero-3-phosphate + an acyl-CoA = a 1,2-diacyl-sn-glycero-3-phosphate + CoA. The catalysed reaction is 1-(9Z-octadecenoyl)-sn-glycero-3-phosphate + (9Z)-octadecenoyl-CoA = 1,2-di-(9Z-octadecenoyl)-sn-glycero-3-phosphate + CoA. The enzyme catalyses 1-(9Z-octadecenoyl)-sn-glycero-3-phosphate + hexadecanoyl-CoA = 1-(9Z)-octadecenoyl-2-hexadecanoyl-sn-glycero-3-phosphate + CoA. It carries out the reaction 1-(9Z-octadecenoyl)-sn-glycero-3-phosphate + octadecanoyl-CoA = 1-(9Z-octadecenoyl)-2-octadecanoyl-sn-glycero-3-phosphate + CoA. It catalyses the reaction 1-(9Z-octadecenoyl)-sn-glycero-3-phosphate + (5Z,8Z,11Z,14Z)-eicosatetraenoyl-CoA = 1-(9Z)-octadecenoyl-2-(5Z,8Z,11Z,14Z)-eicosatetraenoyl-sn-glycero-3-phosphate + CoA. The catalysed reaction is eicosanoyl-CoA + 1-(9Z-octadecenoyl)-sn-glycero-3-phosphate = 1-(9Z)-octadecenoyl-2-eicosanoyl-sn-glycero-3-phosphate + CoA. The enzyme catalyses 1-hexadecanoyl-sn-glycero-3-phosphate + (9Z)-octadecenoyl-CoA = 1-hexadecanoyl-2-(9Z-octadecenoyl)-sn-glycero-3-phosphate + CoA. It carries out the reaction 1-octadecanoyl-sn-glycero-3-phosphate + (9Z)-octadecenoyl-CoA = 1-octadecanoyl-2-(9Z-octadecenoyl)-sn-glycero-3-phosphate + CoA. It catalyses the reaction 1-(5Z,8Z,11Z,14Z-eicosatetraenoyl)-sn-glycero-3-phosphate + (9Z)-octadecenoyl-CoA = 1-(5Z,8Z,11Z,14Z)-eicosatetraenoyl-2-(9Z)-octadecenoyl-sn-glycero-3-phosphate + CoA. With respect to regulation, acyltransferase activity is inhibited by detergents such as Triton X-100 and 3-[(3-cholamidopropyl)dimethylammonio]-1-propanesulfonate (CHAPS). Acyltransferase activity is inhibited by the presence of magnesium and calcium. Coenzyme A-dependent lysophosphatidic acid acyltransferase that catalyzes the transfer of an acyl group on a lysophosphatidic acid. Functions preferentially with 1-oleoyl-lysophosphatidic acid followed by 1-palmitoyl-lysophosphatidic acid, 1-stearoyl-lysophosphatidic acid and 1-arachidonoyl-lysophosphatidic acid as lipid acceptor. Functions preferentially with arachidonoyl-CoA followed by oleoyl-CoA as acyl group donors. Functions in phosphatidic acid biosynthesis. May regulate the cellular storage of triacylglycerol through activation of the phospholipase PNPLA2. Involved in keratinocyte differentiation. Regulates lipid droplet fusion. The sequence is that of 1-acylglycerol-3-phosphate O-acyltransferase ABHD5 from Sus scrofa (Pig).